The primary structure comprises 475 residues: Ribulose bisphosphate carboxylase large chain (475 aa).

A propeptide spanning residues 1 to 2 (MS) is cleaved from the precursor. At P3 the chain carries N-acetylproline. K14 bears the N6,N6,N6-trimethyllysine mark. Substrate contacts are provided by N123 and T173. The active-site Proton acceptor is the K175. Residue K177 participates in substrate binding. 3 residues coordinate Mg(2+): K201, D203, and E204. K201 bears the N6-carboxylysine mark. The Proton acceptor role is filled by H294. Residues R295, H327, and S379 each contribute to the substrate site.

Belongs to the RuBisCO large chain family. Type I subfamily. Heterohexadecamer of 8 large chains and 8 small chains. The cofactor is Mg(2+).

It localises to the plastid. The protein resides in the chloroplast. It catalyses the reaction 2 (2R)-3-phosphoglycerate + 2 H(+) = D-ribulose 1,5-bisphosphate + CO2 + H2O. The enzyme catalyses D-ribulose 1,5-bisphosphate + O2 = 2-phosphoglycolate + (2R)-3-phosphoglycerate + 2 H(+). Functionally, ruBisCO catalyzes two reactions: the carboxylation of D-ribulose 1,5-bisphosphate, the primary event in carbon dioxide fixation, as well as the oxidative fragmentation of the pentose substrate in the photorespiration process. Both reactions occur simultaneously and in competition at the same active site. The polypeptide is Ribulose bisphosphate carboxylase large chain (Coleochaete orbicularis (Charophycean green alga)).